The primary structure comprises 313 residues: Epoxide hydrolase 1 (313 aa).

The 275-residue stretch at 25–299 (PAVLFLHGFP…AAHFINQEKA (275 aa)) folds into the AB hydrolase-1 domain. Aspartate 100 serves as the catalytic Nucleophile. Tyrosine 149 is an an epoxide binding site. Residue tyrosine 227 is the Proton donor of the active site. Histidine 292 functions as the Proton acceptor in the catalytic mechanism.

It belongs to the AB hydrolase superfamily. Epoxide hydrolase family. Homodimer. As to expression, highly expressed in fruits 15 days after anthesis (15-DAA).

It catalyses the reaction an epoxide + H2O = an ethanediol. The enzyme catalyses (24S)-24,25-epoxycucurbitadienol + H2O = (24R)-24,25-dihydroxycucurbitadienol. The protein operates within secondary metabolite biosynthesis; terpenoid biosynthesis. Functionally, epoxide hydrolase involved in the biosynthesis of cucurbitacin and mogroside tetracyclic triterpene natural products (e.g. siamenoside I and mogrosides IV, V and VI). Cucurbitacins have cytotoxic properties and exhibit deterrent taste as a defense barrier against herbivores. Mogrosides are nonsugar highly oxygenated compounds used as high-intensity zero-calorie sweeteners; they also possess pharmacological properties such as regulating immunity, lowering blood sugar and lipid levels, protecting the liver, and acting as antioxidants and antitumor agents. Catalyzes the hydrolysis of aromatic epoxide-containing substrates, such as the conversion of 24,25-epoxycucurbitadienol to 24,25-dihydroxycucurbitadienol. The sequence is that of Epoxide hydrolase 1 from Siraitia grosvenorii (Monk's fruit).